The primary structure comprises 693 residues: MEANKRQIVEVDGIKSYFFPHLAHYLASNDELLVNNIAQANKLAAFVLGATDKRPSNEEIAEMILPNDSSAYVLAAGMDVCLILGDDFRPKFDSGAEKLSQLGQAHDLAPIIDDEKKISMLARKTKLKKSNDAKILQVLLKVLGAEEAEEKFVELSELSSALDLDFDVYVLAKLLGFASEELQEEIEIIRDNVTDAFEACKPLLKKLMIEGPKIDSVDPFTQLLLTPQEESIEKAVSHIVARFEEASAVEDDESLVLKSQLGYQLIFLVVRSLADGKRDASRTIQSLMPSSVRAEVFPGLQRSVFKSAVFLASHIIQVFLGSMKSFEDWAFVGLAEDLESTWRRRAIAELLKKFRISVLEQCFSQPIPLLPQSELNNETVIENVNNALQFALWITEFYGSESEKKSLNQLQFLSPKSKNLLVDSFKKFAQGLDSKDHVNRIIESLEKSSSSEPSATAKQTTTSNGPTTVSTAAQVVTVEKMPFSRQTIPCEGTDLANVLNSAKIIGESVTVAAHDVIPEKLNAEKNDNTPSTASPVQFSSDGWDSPTKSVALPPKISTLEEEQEEDTTITKVSPQPQERTGTAWGSGDATPVPLATPVNEYKVSGFGAAPVASGFGQFASSNGTSGRGSYGGGRGGDRGGRGAYGGDRGRGGSGDGSRGYRGGDRGGRGSYGEGSRGYQGGRAGFFGGSRGGS.

Positions 205 to 447 are involved in dimerization; that stretch reads KKLMIEGPKI…VNRIIESLEK (243 aa). Histidine 437 serves as the catalytic Proton acceptor. Disordered stretches follow at residues 445 to 468, 523 to 591, and 620 to 693; these read LEKS…GPTT, AEKN…DATP, and SSNG…RGGS. Over residues 447 to 468 the composition is skewed to low complexity; that stretch reads KSSSSEPSATAKQTTTSNGPTT. Polar residues-rich tracts occupy residues 528–548 and 569–580; these read NTPS…SPTK and ITKVSPQPQERT. A required for interaction with sepa-1 region spans residues 581–614; that stretch reads GTAWGSGDATPVPLATPVNEYKVSGFGAAPVASG. 3 stretches are compositionally biased toward gly residues: residues 625–634, 641–660, and 668–693; these read SGRGSYGGGR, RGAY…SRGY, and RGSY…RGGS. The interval 633 to 693 is RNA-binding RGG-box; that stretch reads GRGGDRGGRG…GFFGGSRGGS (61 aa).

As to quaternary structure, may form a homodimer. Interacts with pgl-1 and pgl-2; this association is not required for P-granule localization of either pgl-1 or pgl-2. Interacts with sepa-1; the interaction is enhanced in the presence of RNA. Interacts with prmt-1; the interaction is direct. Post-translationally, methylated at arginine residues in the RNA-binding RGG-box by prmt-1. Methylation promotes P-granule degradation by autophagy. As to expression, highly expressed in the germline. Expressed in most somatic cells.

The protein localises to the cytoplasmic granule. It catalyses the reaction [RNA] containing guanosine + H2O = an [RNA fragment]-3'-guanosine-3'-phosphate + a 5'-hydroxy-ribonucleotide-3'-[RNA fragment].. Guanyl-specific endoribonuclease which cleaves the phosphodiester bond in single-stranded RNA between the 3'-guanylic residue and the 5'-OH residue of adjacent nucleotide, resulting in the formation of a corresponding 2',3'-cyclic phosphate intermediate. P-granule component involved in germline development. Together with the P-granule component pgl-1, is involved in the formation of P-granules. Together with pgl-1, probably recruits other granule components such as pos-1, mex-3 and glh-1, and RNA to P-granules. In vitro, binds mRNA; this interaction is required for the formation of liquid-like droplets that resemble P-granules. Most likely recruits pgl-1 into P-granules during autophagy. Associates with adapters such as sepa-1 and is required for the accumulation and degradation of P-granules by autophagy in somatic cells. This ensures exclusive localization of the P-granules in germ cells. In addition, may act redundantly with pgl-1 to protect germ cells from excessive germline apoptosis during normal oogenesis and development of the two gonadal arms. This may in part be through regulating the localization of sir-2.1 which is involved in germ cell apoptosis. May protect somatic cells from excessive apoptosis during normal development. The sequence is that of Guanyl-specific ribonuclease pgl-3 from Caenorhabditis elegans.